The primary structure comprises 60 residues: Large ribosomal subunit protein bL32 (60 aa).

The segment covering 1-16 has biased composition (basic residues); that stretch reads MAVPRRKTSPSRRGMR. The interval 1–60 is disordered; sequence MAVPRRKTSPSRRGMRRSADALKRPTYAEDKDSGELRRPHHLDLKTGMYKGRQVIKKKDA. Basic and acidic residues predominate over residues 17 to 44; it reads RSADALKRPTYAEDKDSGELRRPHHLDL.

The protein belongs to the bacterial ribosomal protein bL32 family.

The polypeptide is Large ribosomal subunit protein bL32 (Rhodopseudomonas palustris (strain BisB5)).